A 224-amino-acid polypeptide reads, in one-letter code: Germin-like protein 8-11 (224 aa).

A signal peptide spans 1 to 22; it reads MASSSFLLLATLLAMASWQGMA. A disulfide bridge connects residues C32 and C47. Residues 62-212 form the Cupin type-1 domain; it reads AMLDTPRKTN…AFQVEKGTID (151 aa). N76 carries N-linked (GlcNAc...) asparagine glycosylation. The Mn(2+) site is built by H109, H111, E116, and H157.

The protein belongs to the germin family. As to quaternary structure, oligomer (believed to be a pentamer but probably hexamer).

Its subcellular location is the secreted. The protein localises to the extracellular space. It is found in the apoplast. Plays a role in broad-spectrum disease resistance. Probably has no oxalate oxidase activity even if the active site is conserved. This Oryza sativa subsp. japonica (Rice) protein is Germin-like protein 8-11.